The following is a 491-amino-acid chain: NADPH:adrenodoxin oxidoreductase, mitochondrial (491 aa).

The transit peptide at 1–32 (MASRCWRWWGWSAWPRTRLPPAGSTPSFCHHF) directs the protein to the mitochondrion. 4 residues coordinate FAD: A49, E69, L77, and V113. NADP(+) is bound by residues 184-187 (QGNV), 228-229 (RR), and E240. Phosphoserine occurs at positions 310 and 317. Residues W398 and 405-407 (GVI) each bind FAD. G405 contacts NADP(+).

Belongs to the ferredoxin--NADP reductase type 1 family. As to quaternary structure, monomer. Interacts directly with FDX1. The cofactor is FAD.

The protein resides in the mitochondrion. It is found in the mitochondrion inner membrane. It catalyses the reaction 2 reduced [adrenodoxin] + NADP(+) + H(+) = 2 oxidized [adrenodoxin] + NADPH. The catalysed reaction is 2 reduced [2Fe-2S]-[ferredoxin] + NADP(+) + H(+) = 2 oxidized [2Fe-2S]-[ferredoxin] + NADPH. It functions in the pathway steroid metabolism; cholesterol metabolism. Functionally, serves as the first electron transfer protein in all the mitochondrial P450 systems including cholesterol side chain cleavage in all steroidogenic tissues, steroid 11-beta hydroxylation in the adrenal cortex, 25-OH-vitamin D3-24 hydroxylation in the kidney, and sterol C-27 hydroxylation in the liver. Also acts as a ferredoxin--NADP(+) reductase essential for coenzyme Q biosynthesis: together with FDX2, transfers the electrons required for the hydroxylation reaction performed by COQ6. The sequence is that of NADPH:adrenodoxin oxidoreductase, mitochondrial from Homo sapiens (Human).